We begin with the raw amino-acid sequence, 473 residues long: H(+)/Cl(-) exchange transporter ClcA (473 aa).

Over 1–32 (MKTDTSTFLAQQIVRLRRRDQIRRLMQRDKTP) the chain is Cytoplasmic. The helical transmembrane segment at 33–69 (LAILFMAAVVGTLTGLVGVAFEKTVSWVQNMRIGALV) threads the bilayer. The Periplasmic portion of the chain corresponds to 70–76 (QVADHAF). The helical transmembrane segment at 77-100 (LLWPLAFILSALLAMVGYFLVRKF) threads the bilayer. The short motif at 106 to 110 (GSGIP) is the Selectivity filter part_1 element. Ser107 serves as a coordination point for chloride. The segment at residues 109–116 (IPEIEGAL) is an intramembrane region (helical). Residues 117 to 123 (EELRPVR) lie on the Cytoplasmic side of the membrane. The next 2 membrane-spanning stretches (helical) occupy residues 124–141 (WWRV…TLGA) and 148–166 (EGPT…LDVF). The short motif at 146-150 (GREGP) is the Selectivity filter part_2 element. The Cytoplasmic portion of the chain corresponds to 167-176 (RMRSAEARHT). 2 intramembrane regions (helical) span residues 177 to 189 (LLAT…LSAA) and 193 to 201 (PLAGILFII). At 202–214 (EEMRPQFRYNLIS) the chain is on the cytoplasmic side. The chain crosses the membrane as a helical span at residues 215–232 (IKAVFTGVIMSSIVFRIF). At 233–252 (NGEAPIIEVGKLSDAPVNTL) the chain is on the periplasmic side. The helical transmembrane segment at 253–281 (WLYLILGIIFGCVGPVFNSLVLRTQDMFQ) threads the bilayer. Over 282–287 (RFHGGE) the chain is Cytoplasmic. Residues 288-309 (IKKWVLMGGAIGGLCGILGLIE) traverse the membrane as a helical segment. At 310 to 329 (PAAAGGGFNLIPIAAAGNFS) the chain is on the periplasmic side. 2 helical membrane passes run 330–349 (VGLL…LCFS) and 355–376 (GIFA…MAAA). The short motif at 355-359 (GIFAP) is the Selectivity filter part_3 element. Positions 356 and 357 each coordinate chloride. The Periplasmic segment spans residues 377 to 386 (VLFPQYHLEA). Residues 387–401 (GTFAIAGMGALMAAS) constitute an intramembrane region (helical). Positions 402 to 404 (VRA) form an intramembrane region, note=Loop between two helices. Positions 405 to 416 (PLTGIVLVLEMT) form an intramembrane region, helical. The segment at residues 417-421 (DNYQL) is an intramembrane region (note=Loop between two helices). The chain crosses the membrane as a helical span at residues 422–438 (ILPMIITCLGATLLAQF). Topologically, residues 439–473 (LGGKPLYSTILARTLAKQDAEQAAKNQNAPAGENT) are cytoplasmic. A chloride-binding site is contributed by Tyr445.

It belongs to the chloride channel (TC 2.A.49) family. ClcA subfamily. As to quaternary structure, homodimer.

It is found in the cell inner membrane. It carries out the reaction 2 chloride(in) + H(+)(out) = 2 chloride(out) + H(+)(in). In terms of biological role, proton-coupled chloride transporter. Functions as antiport system and exchanges two chloride ions for 1 proton. Probably acts as an electrical shunt for an outwardly-directed proton pump that is linked to amino acid decarboxylation, as part of the extreme acid resistance (XAR) response. This is H(+)/Cl(-) exchange transporter ClcA from Salmonella typhi.